The sequence spans 1273 residues: DNA gyrase subunit A (1273 aa).

The region spanning 42-931 (LPEVRDGLKP…VDGDVNDEDL (890 aa)) is the Topo IIA-type catalytic domain. Tyr-130 functions as the O-(5'-phospho-DNA)-tyrosine intermediate in the catalytic mechanism. Residues 256–396 (LFGAFISGGF…VQQMLLEFGV (141 aa)) enclose the DOD-type homing endonuclease domain. The GyrA-box signature appears at 958-964 (QKRGGKG).

Belongs to the type II topoisomerase GyrA/ParC subunit family. As to quaternary structure, heterotetramer, composed of two GyrA and two GyrB chains. In the heterotetramer, GyrA contains the active site tyrosine that forms a transient covalent intermediate with the DNA, while GyrB binds cofactors catalyzes ATP hydrolysis. In terms of processing, this protein undergoes a protein self splicing that involves a post-translational excision of the intervening region (intein) followed by peptide ligation.

Its subcellular location is the cytoplasm. It catalyses the reaction ATP-dependent breakage, passage and rejoining of double-stranded DNA.. Its activity is regulated as follows. DNA supercoiling is inhibited by fluoroquinolones; IC(50) 1 ug/ml for sitafloxacin. Functionally, a type II topoisomerase that negatively supercoils closed circular double-stranded (ds) DNA in an ATP-dependent manner to modulate DNA topology and maintain chromosomes in an underwound state. Negative supercoiling favors strand separation, and DNA replication, transcription, recombination and repair, all of which involve strand separation. Also able to catalyze the interconversion of other topological isomers of dsDNA rings, including catenanes and knotted rings. Type II topoisomerases break and join 2 DNA strands simultaneously in an ATP-dependent manner. This Mycobacterium leprae (strain TN) protein is DNA gyrase subunit A.